We begin with the raw amino-acid sequence, 251 residues long: Hydroxyacylglutathione hydrolase (251 aa).

Residues H53, H55, D57, H58, H110, D127, and H165 each coordinate Zn(2+).

This sequence belongs to the metallo-beta-lactamase superfamily. Glyoxalase II family. Monomer. Requires Zn(2+) as cofactor.

The catalysed reaction is an S-(2-hydroxyacyl)glutathione + H2O = a 2-hydroxy carboxylate + glutathione + H(+). It participates in secondary metabolite metabolism; methylglyoxal degradation; (R)-lactate from methylglyoxal: step 2/2. Its function is as follows. Thiolesterase that catalyzes the hydrolysis of S-D-lactoyl-glutathione to form glutathione and D-lactic acid. The sequence is that of Hydroxyacylglutathione hydrolase from Escherichia coli (strain SMS-3-5 / SECEC).